The chain runs to 1066 residues: Isoleucine--tRNA ligase (1066 aa).

The 'HIGH' region signature appears at 47-57 (PYTTGYIHLGT). The short motif at 594–598 (KMSKS) is the 'KMSKS' region element. Residue K597 participates in ATP binding.

It belongs to the class-I aminoacyl-tRNA synthetase family. IleS type 2 subfamily. As to quaternary structure, monomer. Zn(2+) serves as cofactor.

The protein localises to the cytoplasm. The catalysed reaction is tRNA(Ile) + L-isoleucine + ATP = L-isoleucyl-tRNA(Ile) + AMP + diphosphate. Catalyzes the attachment of isoleucine to tRNA(Ile). As IleRS can inadvertently accommodate and process structurally similar amino acids such as valine, to avoid such errors it has two additional distinct tRNA(Ile)-dependent editing activities. One activity is designated as 'pretransfer' editing and involves the hydrolysis of activated Val-AMP. The other activity is designated 'posttransfer' editing and involves deacylation of mischarged Val-tRNA(Ile). The chain is Isoleucine--tRNA ligase from Methanocorpusculum labreanum (strain ATCC 43576 / DSM 4855 / Z).